A 150-amino-acid chain; its full sequence is Arginine repressor (150 aa).

The protein belongs to the ArgR family.

The protein localises to the cytoplasm. It participates in amino-acid biosynthesis; L-arginine biosynthesis [regulation]. In terms of biological role, regulates arginine biosynthesis genes. The polypeptide is Arginine repressor (Finegoldia magna (strain ATCC 29328 / DSM 20472 / WAL 2508) (Peptostreptococcus magnus)).